Reading from the N-terminus, the 343-residue chain is Methionine import ATP-binding protein MetN (343 aa).

The region spanning Ile-2 to Ile-241 is the ABC transporter domain. Ser-40–Thr-46 contacts ATP. The tract at residues Cys-265 to Val-343 is C2 domain. L-methionine contacts are provided by residues Val-278–Leu-283 and Asn-295–Ile-296.

Belongs to the ABC transporter superfamily. Methionine importer (TC 3.A.1.24) family. As to quaternary structure, the complex is composed of two ATP-binding proteins (MetN), two transmembrane proteins (MetI) and a solute-binding protein (MetQ).

Its subcellular location is the cell inner membrane. The catalysed reaction is L-methionine(out) + ATP + H2O = L-methionine(in) + ADP + phosphate + H(+). It catalyses the reaction D-methionine(out) + ATP + H2O = D-methionine(in) + ADP + phosphate + H(+). ATPase activity is inhibited by intracellular L-methionine. Binding of methionine to the dimerized C-terminal regulatory domain stabilizes an inward-facing, ATPase-inactive conformation of the transporter, and as a consequence, the rate of ATP hydrolysis decreases. ADP is a competitive inhibitor. Functionally, part of the ABC transporter complex MetNIQ involved in methionine import. Responsible for energy coupling to the transport system. It has also been shown to be involved in formyl-L-methionine transport. This is Methionine import ATP-binding protein MetN from Escherichia coli (strain K12).